A 139-amino-acid chain; its full sequence is Large ribosomal subunit protein uL16 (139 aa).

Basic residues predominate over residues 1 to 20; sequence MLIPKRTKYRKQHRPVRRGM. The tract at residues 1–21 is disordered; the sequence is MLIPKRTKYRKQHRPVRRGMS.

The protein belongs to the universal ribosomal protein uL16 family. As to quaternary structure, part of the 50S ribosomal subunit.

Its function is as follows. Binds 23S rRNA and is also seen to make contacts with the A and possibly P site tRNAs. The chain is Large ribosomal subunit protein uL16 from Bifidobacterium adolescentis (strain ATCC 15703 / DSM 20083 / NCTC 11814 / E194a).